Consider the following 745-residue polypeptide: Cytoskeleton-associated protein 2-like (745 aa).

The interval 25–141 (AKGKLKSQNT…GELSRKPVGS (117 aa)) is disordered. Residues 30–61 (KSQNTKPYLKSKNNCQNQPPSKSTIRPKNDVT) show a composition bias toward polar residues. A compositionally biased stretch (low complexity) spans 109 to 120 (SSNPYSKPSSKS). Residues 121–133 (FQQCEAGSSTTGE) are compositionally biased toward polar residues. The KEN box signature appears at 185-187 (KEN). The span at 192–203 (LTEPERKPDPKL) shows a compositional bias: basic and acidic residues. Disordered regions lie at residues 192–217 (LTEP…YNQT), 256–276 (VKSQ…KPSR), and 385–411 (RFNS…NNGF). Lys198 participates in a covalent cross-link: Glycyl lysine isopeptide (Lys-Gly) (interchain with G-Cter in SUMO1); alternate. A Glycyl lysine isopeptide (Lys-Gly) (interchain with G-Cter in SUMO2); alternate cross-link involves residue Lys198. At Tyr204 the chain carries Phosphotyrosine. Positions 389–411 (AIPSTPSIRPNGTSGNKHNNNGF) are enriched in polar residues. Residue Thr742 is modified to Phosphothreonine. Phosphoserine is present on Ser745.

Belongs to the CKAP2 family. Ubiquitinated by the anaphase promoting complex/cyclosome (APC/C).

The protein resides in the cytoplasm. It localises to the cytoskeleton. It is found in the spindle pole. In terms of biological role, microtubule-associated protein required for mitotic spindle formation and cell-cycle progression in neural progenitor cells. This is Cytoskeleton-associated protein 2-like (CKAP2L) from Homo sapiens (Human).